We begin with the raw amino-acid sequence, 362 residues long: Chemerin-like receptor 1 (362 aa).

Residues 1–37 (MEAEDYNASYEDYPDDVDPIVVLEELSPLEGRVVRIL) are Extracellular-facing. Asn-7 carries an N-linked (GlcNAc...) asparagine glycan. Residues 38-58 (LVAVYSVICLLGILGNGLVIV) traverse the membrane as a helical segment. Over 59-70 (MITCKMKRTVNT) the chain is Cytoplasmic. The chain crosses the membrane as a helical span at residues 71 to 91 (VWFLNLAVADFLFNVFLPVHI). Residues 92–108 (AYAALDYHWVFGTAMCK) lie on the Extracellular side of the membrane. Residues Cys-107 and Cys-184 are joined by a disulfide bond. The chain crosses the membrane as a helical span at residues 109–129 (ISNFLLIHNMFTSVFLLTVIS). Residues 130–151 (FDRCVSVLLPVWSQNHRSVRLA) lie on the Cytoplasmic side of the membrane. Residues 152 to 172 (YTACLVIWVLAFFLSSPSLVF) form a helical membrane-spanning segment. Topologically, residues 173 to 219 (RDTARLHGKISCFNNFSLSAAVSSPWPAHPQVDPVGSGRHKVVTITR) are extracellular. An N-linked (GlcNAc...) asparagine glycan is attached at Asn-187. The helical transmembrane segment at 220 to 240 (FLCGFLVPGLITTACYLTIVY) threads the bilayer. Over 241–255 (KLQRSRLAKTKKPFK) the chain is Cytoplasmic. Residues 256–276 (IILTIIVTFFLCWCPYHAFYL) traverse the membrane as a helical segment. The Extracellular segment spans residues 277 to 281 (LELRR). The chain crosses the membrane as a helical span at residues 282–302 (GSVPPSVFSLGVPLATAIAIA). Residues 303–362 (NSCMNPILYVFMGQDFKKFRVALFSRLVNALSEDTGHSSYPSHRSFTKMSSMNERETGML) are Cytoplasmic-facing. The residue at position 334 (Ser-334) is a Phosphoserine. Positions 336-362 (DTGHSSYPSHRSFTKMSSMNERETGML) are disordered. Thr-337 bears the Phosphothreonine mark. The segment covering 339–354 (HSSYPSHRSFTKMSSM) has biased composition (polar residues). A phosphoserine mark is found at Ser-344, Ser-347, and Ser-353.

Belongs to the chemokine-like receptor (CMKLR) family. As to expression, widely expressed in several tissues including adipose, muscle, liver and brain.

It is found in the cell membrane. Functionally, receptor for the chemoattractant adipokine chemerin/RARRES2 and for the omega-3 fatty acid derived molecule resolvin E1. Interaction with RARRES2 initiates activation of G proteins G(i)/G(o) and beta-arrestin pathways inducing cellular responses via second messenger pathways such as intracellular calcium mobilization, phosphorylation of MAP kinases MAPK1/MAPK3 (ERK1/2), TYRO3, MAPK14/P38MAPK and PI3K leading to multifunctional effects, like, reduction of immune responses, enhancing of adipogenesis and angionesis. Resolvin E1 down-regulates cytokine production in macrophages by reducing the activation of MAPK1/3 (ERK1/2) and NF-kappa-B. Positively regulates adipogenesis and adipocyte metabolism. This chain is Chemerin-like receptor 1 (CMLKR1), found in Bos taurus (Bovine).